Consider the following 315-residue polypeptide: Ribosomal protein L11 methyltransferase (315 aa).

Positions 164, 185, 207, and 250 each coordinate S-adenosyl-L-methionine.

Belongs to the methyltransferase superfamily. PrmA family.

The protein resides in the cytoplasm. It carries out the reaction L-lysyl-[protein] + 3 S-adenosyl-L-methionine = N(6),N(6),N(6)-trimethyl-L-lysyl-[protein] + 3 S-adenosyl-L-homocysteine + 3 H(+). In terms of biological role, methylates ribosomal protein L11. The chain is Ribosomal protein L11 methyltransferase from Exiguobacterium sibiricum (strain DSM 17290 / CCUG 55495 / CIP 109462 / JCM 13490 / 255-15).